Consider the following 121-residue polypeptide: Small ribosomal subunit protein uS13 (121 aa).

The disordered stretch occupies residues 97–121 (VRGQRTRTNARTRRGARKTVAGKKK). Positions 100 to 121 (QRTRTNARTRRGARKTVAGKKK) are enriched in basic residues.

The protein belongs to the universal ribosomal protein uS13 family. In terms of assembly, part of the 30S ribosomal subunit. Forms a loose heterodimer with protein S19. Forms two bridges to the 50S subunit in the 70S ribosome.

Functionally, located at the top of the head of the 30S subunit, it contacts several helices of the 16S rRNA. In the 70S ribosome it contacts the 23S rRNA (bridge B1a) and protein L5 of the 50S subunit (bridge B1b), connecting the 2 subunits; these bridges are implicated in subunit movement. Contacts the tRNAs in the A and P-sites. In Parasynechococcus marenigrum (strain WH8102), this protein is Small ribosomal subunit protein uS13.